The sequence spans 189 residues: MASYSTNEFKGGLKVLIDGNPMVIVENEFVKPGKGQAFNRVKLKNLLNDRVVEKTFKSGESVEAADVEELTTVYSYFDGDSYVFMHPETFEQYMVSEEALGETKKWLKDQDEYQVILFNGQPISIIAANFVNLEIIETDPGLKGDTAGTGGKPATLSTGAVVRVPLFVQTGEIIKVDTRTSTYVSRVKD.

Residue lysine 34 is modified to N6-(3,6-diaminohexanoyl)-5-hydroxylysine.

It belongs to the elongation factor P family. May be beta-lysylated on the epsilon-amino group of Lys-34 by the combined action of EpmA and EpmB, and then hydroxylated on the C5 position of the same residue by EpmC (if this protein is present). Lysylation is critical for the stimulatory effect of EF-P on peptide-bond formation. The lysylation moiety may extend toward the peptidyltransferase center and stabilize the terminal 3-CCA end of the tRNA. Hydroxylation of the C5 position on Lys-34 may allow additional potential stabilizing hydrogen-bond interactions with the P-tRNA.

It is found in the cytoplasm. It functions in the pathway protein biosynthesis; polypeptide chain elongation. Functionally, involved in peptide bond synthesis. Alleviates ribosome stalling that occurs when 3 or more consecutive Pro residues or the sequence PPG is present in a protein, possibly by augmenting the peptidyl transferase activity of the ribosome. Modification of Lys-34 is required for alleviation. The sequence is that of Elongation factor P from Francisella tularensis subsp. tularensis (strain FSC 198).